A 159-amino-acid polypeptide reads, in one-letter code: SsrA-binding protein (159 aa).

The tract at residues 137–159 is disordered; sequence DKRETEKQRDWSREKGRLLKERG.

The protein belongs to the SmpB family.

It is found in the cytoplasm. In terms of biological role, required for rescue of stalled ribosomes mediated by trans-translation. Binds to transfer-messenger RNA (tmRNA), required for stable association of tmRNA with ribosomes. tmRNA and SmpB together mimic tRNA shape, replacing the anticodon stem-loop with SmpB. tmRNA is encoded by the ssrA gene; the 2 termini fold to resemble tRNA(Ala) and it encodes a 'tag peptide', a short internal open reading frame. During trans-translation Ala-aminoacylated tmRNA acts like a tRNA, entering the A-site of stalled ribosomes, displacing the stalled mRNA. The ribosome then switches to translate the ORF on the tmRNA; the nascent peptide is terminated with the 'tag peptide' encoded by the tmRNA and targeted for degradation. The ribosome is freed to recommence translation, which seems to be the essential function of trans-translation. The polypeptide is SsrA-binding protein (Mesorhizobium japonicum (strain LMG 29417 / CECT 9101 / MAFF 303099) (Mesorhizobium loti (strain MAFF 303099))).